Reading from the N-terminus, the 382-residue chain is Galactokinase (382 aa).

34 to 37 contributes to the substrate binding site; sequence EHTD. Position 124–130 (124–130) interacts with ATP; sequence GAGLSSS. Mg(2+) contacts are provided by S130 and E162. D174 serves as the catalytic Proton acceptor. Residue Y223 participates in substrate binding.

Belongs to the GHMP kinase family. GalK subfamily.

The protein resides in the cytoplasm. The catalysed reaction is alpha-D-galactose + ATP = alpha-D-galactose 1-phosphate + ADP + H(+). It participates in carbohydrate metabolism; galactose metabolism. In terms of biological role, catalyzes the transfer of the gamma-phosphate of ATP to D-galactose to form alpha-D-galactose-1-phosphate (Gal-1-P). The polypeptide is Galactokinase (Citrobacter koseri (strain ATCC BAA-895 / CDC 4225-83 / SGSC4696)).